Here is a 380-residue protein sequence, read N- to C-terminus: Transcription factor RF2a (380 aa).

The disordered stretch occupies residues 1-57 (MNREKSPIPGDGGDGLPPQATRRAGPPAAAAAAEYDISRMPDFPTRNPGHRRAHSEI). Residues 16-33 (LPPQATRRAGPPAAAAAA) are compositionally biased toward low complexity. Positions 56–108 (EILSLPEDLDLCAAGGGDGPSLSDENDEELFSMFLDVEKLNSTCGASSEAEAE) are activation of RTBV promoter. In terms of domain architecture, bZIP spans 181 to 244 (DPKRAKRIWA…SGLTTENSEL (64 aa)). Positions 183–204 (KRAKRIWANRQSAARSKERKMR) are basic motif. The segment at 209 to 244 (LERKVQTLQTEATTLSAQLALLQRDTSGLTTENSEL) is leucine-zipper. The interval 283–357 (GGMMMNFGGM…AQQLQQAARD (75 aa)) is interaction with TBP2. Over residues 326–355 (QAQQQQVLHPQHQQQQPLHPLQAQQLQQAA) the composition is skewed to low complexity. Residues 326–380 (QAQQQQVLHPQHQQQQPLHPLQAQQLQQAARDLKMKSPMGGQSQWGDGKSGSSGN) are disordered.

Belongs to the bZIP family. Binds DNA as a homodimer or as a heterodimer with RF2b. The heterodimer binds stronger to DNA than the homodimer. Interacts with TBP2. As to expression, expressed at high levels in levels in leaf sheath, moderate levels in leaf blade, but not in roots. Predominantly expressed in vascular tissues.

Its subcellular location is the nucleus. Functionally, transcription factor probably involved in vascular development and shoot tissue organization. Binds to the DNA sequence 5'-CCGAGTGTGCCCCTGG-3' present in the promoter region Box II of the phloem-specific rice tungro bacilliform virus (RTBV) promoter. May regulate tissue-specific expression of the RTBV promoter and virus replication. This Oryza sativa subsp. japonica (Rice) protein is Transcription factor RF2a (RF2a).